An 830-amino-acid chain; its full sequence is GPI ethanolamine phosphate transferase 2 (830 aa).

The signal sequence occupies residues 1-32; the sequence is MNLKQFTCLSCAQLLAILLFIFAFFPRKIVLT. Topologically, residues 33–321 are lumenal; that stretch reads GISKQDPDQD…QYLETVQQID (289 aa). Residues Asn-145, Asn-185, and Asn-298 are each glycosylated (N-linked (GlcNAc...) asparagine). The helical transmembrane segment at 322-342 threads the bilayer; sequence IVPTIAALFGMPIPMNSVGII. Residues 343–405 are Cytoplasmic-facing; the sequence is IPDFLQLLPN…TKSATNYNYP (63 aa). Residues 406–426 traverse the membrane as a helical segment; that stretch reads LLTLAFVGFLIITIIAIYVLL. Residues 427-439 lie on the Lumenal side of the membrane; that stretch reads RYSGPDFWQLRVS. The helical transmembrane segment at 440 to 460 threads the bilayer; the sequence is SLSVLLVSIILGVSTFASSFI. The Cytoplasmic segment spans residues 461–469; it reads EEEHQLWWW. Residues 470-490 form a helical membrane-spanning segment; the sequence is IVTAFSAVPLFVYRLNVLIIV. At 491-533 the chain is on the lumenal side; the sequence is RWFIMMACVRSIKFWNNSGQKFIYSNVMSNLLNQNPSWKWCLN. Residue Asn-506 is glycosylated (N-linked (GlcNAc...) asparagine). Residues 534–554 form a helical membrane-spanning segment; it reads MLTFLVLIMASAGFQVLHFIV. Residues 555 to 598 lie on the Cytoplasmic side of the membrane; it reads TTILVGLCFTYKISWEIVNGNQAEIPLFMHDLLAKIDFAPTESN. Residues 599 to 619 form a helical membrane-spanning segment; the sequence is LIVLARVFFQAWAIVVISRLV. Over 620–651 the chain is Lumenal; the sequence is LTKLKVLNKNYLIKDMKVYITILLMFQTSSQN. Residues 652 to 672 traverse the membrane as a helical segment; it reads IGQFLVFQILESQIFYFFQNI. The Cytoplasmic segment spans residues 673 to 682; sequence PTASLTSTSK. The helical transmembrane segment at 683-703 threads the bilayer; sequence IYFSNLVSLILQNFTFFQFGG. Residues 704-724 lie on the Lumenal side of the membrane; sequence TNSISTIDLGNAYHGVSSDYN. Residues 725-745 form a helical membrane-spanning segment; the sequence is IYVVGILMSVANFAPAIYWSM. Topologically, residues 746-768 are cytoplasmic; that stretch reads LPWSINYASIPAQVKLQTFIRSK. A helical transmembrane segment spans residues 769–789; sequence LPAFTYHCIFGTCLMTACVVL. The Lumenal portion of the chain corresponds to 790 to 805; sequence RFHLFIWSVFSPKLCY. Residues 806–826 form a helical membrane-spanning segment; sequence FLGWNFVMGLLNGWLPELALL. Over 827 to 830 the chain is Cytoplasmic; that stretch reads CALD.

Belongs to the PIGG/PIGN/PIGO family. PIGG subfamily. In terms of processing, N-glycosylated.

Its subcellular location is the endoplasmic reticulum membrane. It functions in the pathway glycolipid biosynthesis; glycosylphosphatidylinositol-anchor biosynthesis. In terms of biological role, ethanolamine phosphate transferase involved in glycosylphosphatidylinositol-anchor biosynthesis. Transfers ethanolamine phosphate to the GPI second mannose. Although not essential, addition of ethanolamine phosphate to the second mannose plays an important role in cell separation via the GPI-based modification of daughter-specific proteins. This chain is GPI ethanolamine phosphate transferase 2 (LAS21), found in Saccharomyces cerevisiae (strain ATCC 204508 / S288c) (Baker's yeast).